Consider the following 26-residue polypeptide: U1-poneritoxin-Ni1b (26 aa).

The protein belongs to the non-disulfide-bridged peptide (NDBP) superfamily. Medium-length antimicrobial peptide (group 3) family. Ponericin-W subfamily. In terms of tissue distribution, expressed by the venom gland.

Its subcellular location is the secreted. The protein resides in the target cell membrane. Has a broad spectrum of activity against both Gram-positive and Gram-negative bacteria and S.cerevisiae. Has insecticidal and hemolytic activities. May act by disrupting the integrity of the bacterial cell membrane. In Neoponera inversa (Ant), this protein is U1-poneritoxin-Ni1b.